A 352-amino-acid polypeptide reads, in one-letter code: Carbohydrate sulfotransferase 11 (352 aa).

Residues 1–16 (MKPALLEVMRMNRICR) are Cytoplasmic-facing. The chain crosses the membrane as a helical; Signal-anchor for type II membrane protein span at residues 17–37 (MVLATCFGSFILVIFYFQSML). Residues 38 to 352 (HPVMRRNPFG…YSVPNYLKLD (315 aa)) are Lumenal-facing. Residues 124–130 (PKVACTN) and 186–194 (REPFERLVS) each bind 3'-phosphoadenylyl sulfate. N-linked (GlcNAc...) asparagine glycosylation is found at N205, N223, N321, and N342.

This sequence belongs to the sulfotransferase 2 family. In terms of processing, N-glycosylated; required for activity and stability. Predominantly expressed in brain and kidney. Also expressed at weaker level in heart, spleen and lung. Expressed in developing chondrocytes.

It localises to the golgi apparatus membrane. It catalyses the reaction chondroitin beta-D-glucuronate + n 3'-phosphoadenylyl sulfate = chondroitin 4'-sulfate + n adenosine 3',5'-bisphosphate + n H(+). Functionally, catalyzes the transfer of sulfate to position 4 of the N-acetylgalactosamine (GalNAc) residue of chondroitin. Chondroitin sulfate constitutes the predominant proteoglycan present in cartilage and is distributed on the surfaces of many cells and extracellular matrices. Can also sulfate Gal residues in desulfated dermatan sulfate. Preferentially sulfates in GlcA-&gt;GalNAc unit than in IdoA-&gt;GalNAc unit. Does not form 4, 6-di-O-sulfated GalNAc when chondroitin sulfate C is used as an acceptor. In Mus musculus (Mouse), this protein is Carbohydrate sulfotransferase 11 (Chst11).